We begin with the raw amino-acid sequence, 178 residues long: S-alkylcysteine N-acetyltransferase (178 aa).

An N-acetyltransferase domain is found at 4–163 (DIFRLATVED…IGVMMHKVLI (160 aa)).

The protein belongs to the acetyltransferase family.

The enzyme catalyses an S-substituted L-cysteine + acetyl-CoA = an N-acetyl-L-cysteine-S-conjugate + CoA + H(+). It carries out the reaction S-benzyl-L-cysteine + acetyl-CoA = N-acetyl-S-benzyl-L-cysteine + CoA + H(+). It catalyses the reaction S-methyl-L-cysteine + acetyl-CoA = N-acetyl-S-methyl-L-cysteine + CoA + H(+). Its pathway is amino-acid metabolism. Its function is as follows. Involved in a cysteine salvage pathway from S-alkylcysteine. Catalyzes the first step in this pathway, i.e. the amine acetylation of an S-alkylcysteine with a preference for S-benzyl-L-cysteine over S-methyl-L-cysteine. This pathway is likely important in the catabolism of alkylated cysteine generated by proteolysis of alkylated glutathione formed in the detoxification of a wide range of electrophiles. The chain is S-alkylcysteine N-acetyltransferase from Bacillus subtilis (strain 168).